We begin with the raw amino-acid sequence, 213 residues long: 24 kDa ookinete surface protein (213 aa).

An N-terminal signal peptide occupies residues 1–28 (MNFKYSFIFLFFIQLAIRYNNAKITVDT). One can recognise an EGF-like 1; truncated domain in the interval 30–59 (CKGGKLIQMSNHYECKCPSGYALKTENTCE). 2 consecutive EGF-like domains span residues 60 to 108 (PIVK…NICK) and 108 to 148 (KPTR…GKCT). 6 cysteine pairs are disulfide-bonded: Cys64/Cys80, Cys74/Cys94, Cys96/Cys107, Cys112/Cys122, Cys117/Cys134, and Cys136/Cys147. The EGF-like 4; truncated domain occupies 151–175 (GETKCLLKCKAAEECKLTGKHYECV). The GPI-anchor amidated asparagine moiety is linked to residue Asn190. Asn190 carries an N-linked (GlcNAc...) asparagine glycan. A propeptide spans 191–213 (SSFMNGMSIISIIALLVIYVIVM) (removed in mature form).

The protein localises to the cell membrane. The sequence is that of 24 kDa ookinete surface protein from Plasmodium berghei (strain Anka).